Reading from the N-terminus, the 290-residue chain is Short neuropeptide F (290 aa).

Residues 1-32 (MFRFNPQLSHGCALALICCLLNLLMMHQPTNA) form the signal peptide. Positions 33–87 (ELSPVVQGEFFLPILPDDHPPNTDTSFGGPISNLYDNLLQREYAGPVVFPNHQVE) are excised as a propeptide. Residues F100 and F134 each carry the phenylalanine amide modification. Residues 138–290 (DPTLPQMRRT…IETSSIAPKN (153 aa)) constitute a propeptide that is removed on maturation. The tract at residues 238–290 (VAGYANDGDDTEAQLDEDTSEFQREARKPMRLRWGRSTGKAPQIETSSIAPKN) is disordered. Residues 244 to 257 (DGDDTEAQLDEDTS) show a composition bias toward acidic residues. Positions 281 to 290 (IETSSIAPKN) are enriched in polar residues.

Belongs to the NPY family.

Its subcellular location is the secreted. Functionally, plays a role in controlling food intake and regulating body size. This chain is Short neuropeptide F, found in Drosophila pseudoobscura pseudoobscura (Fruit fly).